Here is a 161-residue protein sequence, read N- to C-terminus: Putative 4-hydroxy-4-methyl-2-oxoglutarate aldolase (161 aa).

Substrate is bound by residues 75 to 78 and arginine 97; that span reads GDNL. Aspartate 98 contacts a divalent metal cation.

The protein belongs to the class II aldolase/RraA-like family. As to quaternary structure, homotrimer. Requires a divalent metal cation as cofactor.

The catalysed reaction is 4-hydroxy-4-methyl-2-oxoglutarate = 2 pyruvate. It carries out the reaction oxaloacetate + H(+) = pyruvate + CO2. Its function is as follows. Catalyzes the aldol cleavage of 4-hydroxy-4-methyl-2-oxoglutarate (HMG) into 2 molecules of pyruvate. Also contains a secondary oxaloacetate (OAA) decarboxylase activity due to the common pyruvate enolate transition state formed following C-C bond cleavage in the retro-aldol and decarboxylation reactions. This Alkalilimnicola ehrlichii (strain ATCC BAA-1101 / DSM 17681 / MLHE-1) protein is Putative 4-hydroxy-4-methyl-2-oxoglutarate aldolase.